Consider the following 94-residue polypeptide: Small ribosomal subunit protein uS19 (94 aa).

Belongs to the universal ribosomal protein uS19 family.

Protein S19 forms a complex with S13 that binds strongly to the 16S ribosomal RNA. The sequence is that of Small ribosomal subunit protein uS19 from Halothermothrix orenii (strain H 168 / OCM 544 / DSM 9562).